A 137-amino-acid chain; its full sequence is Endoribonuclease YbeY (137 aa).

Residues His105, His109, and Asp115 each coordinate Zn(2+).

The protein belongs to the endoribonuclease YbeY family. Requires Zn(2+) as cofactor.

It localises to the cytoplasm. Single strand-specific metallo-endoribonuclease involved in late-stage 70S ribosome quality control and in maturation of the 3' terminus of the 16S rRNA. The sequence is that of Endoribonuclease YbeY from Chlorobium luteolum (strain DSM 273 / BCRC 81028 / 2530) (Pelodictyon luteolum).